We begin with the raw amino-acid sequence, 153 residues long: Ribonuclease H (153 aa).

The 143-residue stretch at 4-146 (NNEIVEIYTD…CDRLATEQIK (143 aa)) folds into the RNase H type-1 domain. Asp-13, Glu-51, Asp-73, and Asp-138 together coordinate Mg(2+).

The protein belongs to the RNase H family. As to quaternary structure, monomer. It depends on Mg(2+) as a cofactor.

The protein localises to the cytoplasm. It catalyses the reaction Endonucleolytic cleavage to 5'-phosphomonoester.. In terms of biological role, endonuclease that specifically degrades the RNA of RNA-DNA hybrids. The chain is Ribonuclease H from Caldanaerobacter subterraneus subsp. tengcongensis (strain DSM 15242 / JCM 11007 / NBRC 100824 / MB4) (Thermoanaerobacter tengcongensis).